A 186-amino-acid polypeptide reads, in one-letter code: UPF0301 protein Swit_2673 (186 aa).

It belongs to the UPF0301 (AlgH) family.

In Rhizorhabdus wittichii (strain DSM 6014 / CCUG 31198 / JCM 15750 / NBRC 105917 / EY 4224 / RW1) (Sphingomonas wittichii), this protein is UPF0301 protein Swit_2673.